The sequence spans 343 residues: NAD-dependent deacetylase sir2E (343 aa).

The Deacetylase sirtuin-type domain maps to 27–300; it reads YLKNKKEFEF…PLLERQLLYE (274 aa). H152 functions as the Proton acceptor in the catalytic mechanism. C160, C165, C200, and C203 together coordinate Zn(2+).

It belongs to the sirtuin family.

The protein resides in the nucleus. It catalyses the reaction N(6)-acetyl-L-lysyl-[protein] + NAD(+) + H2O = 2''-O-acetyl-ADP-D-ribose + nicotinamide + L-lysyl-[protein]. Functionally, NAD-dependent deacetylase, which plays an important role in the regulation of transcriptional repression. May play a role in cell cycle. When overexpressed, the cell cycle is accelerated. The protein is NAD-dependent deacetylase sir2E (sir2E) of Dictyostelium discoideum (Social amoeba).